The following is a 64-amino-acid chain: Large ribosomal subunit protein uL1 (64 aa).

Belongs to the universal ribosomal protein uL1 family. In terms of assembly, part of the 50S ribosomal subunit.

Its function is as follows. Binds directly to 23S rRNA. The L1 stalk is quite mobile in the ribosome, and is involved in E site tRNA release. In terms of biological role, protein L1 is also a translational repressor protein, it controls the translation of the L11 operon by binding to its mRNA. The protein is Large ribosomal subunit protein uL1 (rplA) of Streptomyces lavendulae.